The primary structure comprises 446 residues: tRNA modification GTPase MnmE (446 aa).

Positions 24, 81, and 120 each coordinate (6S)-5-formyl-5,6,7,8-tetrahydrofolate. Positions Gly216–Leu368 constitute a TrmE-type G domain. Residue Asn226 coordinates K(+). GTP contacts are provided by residues Asn226–Ser231, Thr245–Thr251, and Asp270–Gly273. Ser230 serves as a coordination point for Mg(2+). Residues Thr245, Val247, and Thr250 each contribute to the K(+) site. Thr251 serves as a coordination point for Mg(2+). Lys446 is a binding site for (6S)-5-formyl-5,6,7,8-tetrahydrofolate.

This sequence belongs to the TRAFAC class TrmE-Era-EngA-EngB-Septin-like GTPase superfamily. TrmE GTPase family. As to quaternary structure, homodimer. Heterotetramer of two MnmE and two MnmG subunits. The cofactor is K(+).

The protein localises to the cytoplasm. In terms of biological role, exhibits a very high intrinsic GTPase hydrolysis rate. Involved in the addition of a carboxymethylaminomethyl (cmnm) group at the wobble position (U34) of certain tRNAs, forming tRNA-cmnm(5)s(2)U34. The protein is tRNA modification GTPase MnmE of Xanthomonas oryzae pv. oryzae (strain KACC10331 / KXO85).